Here is a 122-residue protein sequence, read N- to C-terminus: Large ribosomal subunit protein uL14 (122 aa).

This sequence belongs to the universal ribosomal protein uL14 family. Part of the 50S ribosomal subunit. Forms a cluster with proteins L3 and L19. In the 70S ribosome, L14 and L19 interact and together make contacts with the 16S rRNA in bridges B5 and B8.

Binds to 23S rRNA. Forms part of two intersubunit bridges in the 70S ribosome. The polypeptide is Large ribosomal subunit protein uL14 (Micrococcus luteus (strain ATCC 4698 / DSM 20030 / JCM 1464 / CCM 169 / CCUG 5858 / IAM 1056 / NBRC 3333 / NCIMB 9278 / NCTC 2665 / VKM Ac-2230) (Micrococcus lysodeikticus)).